Here is a 196-residue protein sequence, read N- to C-terminus: Probable nicotinate-nucleotide adenylyltransferase (196 aa).

It belongs to the NadD family.

The catalysed reaction is nicotinate beta-D-ribonucleotide + ATP + H(+) = deamido-NAD(+) + diphosphate. It functions in the pathway cofactor biosynthesis; NAD(+) biosynthesis; deamido-NAD(+) from nicotinate D-ribonucleotide: step 1/1. Functionally, catalyzes the reversible adenylation of nicotinate mononucleotide (NaMN) to nicotinic acid adenine dinucleotide (NaAD). The polypeptide is Probable nicotinate-nucleotide adenylyltransferase (Caldicellulosiruptor bescii (strain ATCC BAA-1888 / DSM 6725 / KCTC 15123 / Z-1320) (Anaerocellum thermophilum)).